Here is a 255-residue protein sequence, read N- to C-terminus: 5-oxoprolinase subunit A (255 aa).

This sequence belongs to the LamB/PxpA family. As to quaternary structure, forms a complex composed of PxpA, PxpB and PxpC.

The enzyme catalyses 5-oxo-L-proline + ATP + 2 H2O = L-glutamate + ADP + phosphate + H(+). Catalyzes the cleavage of 5-oxoproline to form L-glutamate coupled to the hydrolysis of ATP to ADP and inorganic phosphate. This Rhodopseudomonas palustris (strain BisB18) protein is 5-oxoprolinase subunit A.